Here is a 552-residue protein sequence, read N- to C-terminus: Scavenger receptor class B member 1 (552 aa).

The Cytoplasmic portion of the chain corresponds to 1 to 11; that stretch reads MGCSAKARWAA. A helical membrane pass occupies residues 12 to 32; it reads GALGVAGLLCAVLGAVMIVMV. Residues 33 to 443 lie on the Extracellular side of the membrane; that stretch reads PSLIKQQVLK…LVLMPKVMHY (411 aa). N-linked (GlcNAc...) asparagine glycans are attached at residues N102, N108, N173, N212, N227, N255, N310, N330, and N383. C251 and C384 are oxidised to a cystine. Residues Y393 and V458 each carry the phosphoserine modification. Residues 444 to 464 form a helical membrane-spanning segment; the sequence is AQYVLLALGCVLLLVPVICQI. C462 carries the S-palmitoyl cysteine lipid modification. Residues 465–552 lie on the Cytoplasmic side of the membrane; the sequence is RSQVGAGQRA…GPSLGGGTGS (88 aa). T493 is subject to Phosphoserine.

The protein belongs to the CD36 family. The C-terminal region binds to PDZK1. As to quaternary structure, (Microbial infection) Interacts with hepatitis C virus E1:E2 glycoproteins. In terms of processing, N-glycosylated. Post-translationally, the six cysteines of the extracellular domain are all involved in intramolecular disulfide bonds. As to expression, widely expressed.

The protein resides in the cell membrane. It localises to the membrane. It is found in the caveola. Receptor for different ligands such as phospholipids, cholesterol ester, lipoproteins, phosphatidylserine and apoptotic cells. Receptor for HDL, mediating selective uptake of cholesteryl ether and HDL-dependent cholesterol efflux. Also facilitates the flux of free and esterified cholesterol between the cell surface and apoB-containing lipoproteins and modified lipoproteins, although less efficiently than HDL. May be involved in the phagocytosis of apoptotic cells, via its phosphatidylserine binding activity. Its function is as follows. (Microbial infection) Acts as a receptor for hepatitis C virus in hepatocytes and appears to facilitate its cell entry. Binding between SCARB1 and the hepatitis C virus glycoprotein E2 is independent of the genotype of the viral isolate. Functionally, (Microbial infection) Mediates uptake of M.fortuitum, E.coli and S.aureus. In terms of biological role, (Microbial infection) Facilitates the entry of human coronavirus SARS-CoV-2 by acting as an entry cofactor through HDL binding. The chain is Scavenger receptor class B member 1 (SCARB1) from Homo sapiens (Human).